Here is a 66-residue protein sequence, read N- to C-terminus: Large ribosomal subunit protein uL29 (66 aa).

The protein belongs to the universal ribosomal protein uL29 family. As to quaternary structure, part of the 50S ribosomal subunit.

This chain is Large ribosomal subunit protein uL29, found in Thermococcus kodakarensis (strain ATCC BAA-918 / JCM 12380 / KOD1) (Pyrococcus kodakaraensis (strain KOD1)).